We begin with the raw amino-acid sequence, 346 residues long: MKLKTMTMEWTGDELILIDQRKIPLKEEYMSCKTYKEVALAIKEMVVRGAPAIGASAAFGYVLGAREKFVEDFEAFVEKMREVKEVLANTRPTAVNLFWALNRMENALRKYGKVEGVLEFLENEALNIAKEDIEVNMAIGRYGAQLLKDGDTVLTHCNAGALATVDYGTALGVIRAAVEQGKRIKVFADETRPYLQGARLTAWELMKDGIDVTLISDNMSGWAMKLGKINAVIVGADRVASNGDVANKIGTYMVAVLAKRHGIPFYVAAPTSTIDLNTQTGKDIPIEERKHTEVTHCGGTQIAPDNVKVFNPAFDVTNAELITAIITEKGIVYPPYEENLKKLFEE.

Residues 48 to 50, arginine 91, and glutamine 196 each bind substrate; that span reads RGA. Residue aspartate 237 is the Proton donor of the active site. 247–248 contacts substrate; the sequence is NK.

It belongs to the eIF-2B alpha/beta/delta subunits family. MtnA subfamily.

It catalyses the reaction 5-(methylsulfanyl)-alpha-D-ribose 1-phosphate = 5-(methylsulfanyl)-D-ribulose 1-phosphate. It functions in the pathway amino-acid biosynthesis; L-methionine biosynthesis via salvage pathway; L-methionine from S-methyl-5-thio-alpha-D-ribose 1-phosphate: step 1/6. Its function is as follows. Catalyzes the interconversion of methylthioribose-1-phosphate (MTR-1-P) into methylthioribulose-1-phosphate (MTRu-1-P). This is Methylthioribose-1-phosphate isomerase from Thermosipho melanesiensis (strain DSM 12029 / CIP 104789 / BI429).